The sequence spans 176 residues: Lipoprotein signal peptidase (176 aa).

4 helical membrane passes run 26–46 (LWLA…IVIV), 57–77 (VTGF…SFLA), 82–102 (WQRW…VWLL), and 111–131 (FCFA…DRVI). Residues Asp137 and Asp155 contribute to the active site. The helical transmembrane segment at 147 to 167 (HWPAFNVADCAITVGAVLLIV) threads the bilayer.

The protein belongs to the peptidase A8 family.

The protein localises to the cell inner membrane. It carries out the reaction Release of signal peptides from bacterial membrane prolipoproteins. Hydrolyzes -Xaa-Yaa-Zaa-|-(S,diacylglyceryl)Cys-, in which Xaa is hydrophobic (preferably Leu), and Yaa (Ala or Ser) and Zaa (Gly or Ala) have small, neutral side chains.. Its pathway is protein modification; lipoprotein biosynthesis (signal peptide cleavage). This protein specifically catalyzes the removal of signal peptides from prolipoproteins. This Cupriavidus taiwanensis (strain DSM 17343 / BCRC 17206 / CCUG 44338 / CIP 107171 / LMG 19424 / R1) (Ralstonia taiwanensis (strain LMG 19424)) protein is Lipoprotein signal peptidase.